A 309-amino-acid polypeptide reads, in one-letter code: tRNA pseudouridine synthase B (309 aa).

Asp52 acts as the Nucleophile in catalysis.

It belongs to the pseudouridine synthase TruB family. Type 1 subfamily.

The catalysed reaction is uridine(55) in tRNA = pseudouridine(55) in tRNA. Its function is as follows. Responsible for synthesis of pseudouridine from uracil-55 in the psi GC loop of transfer RNAs. The sequence is that of tRNA pseudouridine synthase B from Leptospira interrogans serogroup Icterohaemorrhagiae serovar Lai (strain 56601).